Reading from the N-terminus, the 596-residue chain is Beta-glucuronidase (596 aa).

The D-glucuronate site is built by Asp-168 and Asn-412. Glu-413 serves as the catalytic Proton donor. Residues Asn-464, Tyr-470, Glu-502, Trp-547, and Lys-566 each coordinate D-glucuronate. Glu-502 (nucleophile) is an active-site residue. The short motif at 564–566 (NKK) is the N-K motif element.

The protein belongs to the glycosyl hydrolase 2 family.

The protein resides in the cytoplasm. The catalysed reaction is a beta-D-glucuronoside + H2O = D-glucuronate + an alcohol. Its function is as follows. Displays beta-glucuronidase activity with the artificial substrate p-nitrophenyl-beta-D-glucuronide (PNPG). Is probably involved in the metabolism of oligosaccharides containing the 3-O-beta-D-glucopyranosyl-beta-D-glucuronide structure released from bacterial and plant acidic carbohydrates. The polypeptide is Beta-glucuronidase (Paenibacillus borealis).